A 417-amino-acid chain; its full sequence is MAEIKNYTLNFGPQHPAAHGVLRLVLELDGEVIQRADPHIGLLHRATEKLAEQKTYLQSVPYMDRLDYVSMMCNEHAYVMSIEKMLNLEVPLRAQYIRVMFDEITRILNHLMWLGAHALDVGAMGVFLYAFREREDLMDCYEAVSGARMHAAYYRPGGVYRDLPDAMPQHKASIIRNAKAINKLNENRQGSLLDFIEDFTNRFPTYVDEYETLLTDNRIWKQRLVGVGVVSPERAMAMGFTGPMLRGSGIEWDLRKKQPYEVYDLLDFDIPVGTNGDCYDRYLVRVEEMRQSNRIIKQCVEWLRNNPGSVMTDNHKVAPPSRVDMKSNMEDLIHHFKLFTEGFHVPVGEAYAAVEHPKGEFGVYLISDGANKPYRMKIRAPGFPHLQGLDEMAKGHMIADAVTIIGTQDIVFGEIDR.

The protein belongs to the complex I 49 kDa subunit family. NDH-1 is composed of 14 different subunits. Subunits NuoB, C, D, E, F, and G constitute the peripheral sector of the complex.

Its subcellular location is the cell inner membrane. It carries out the reaction a quinone + NADH + 5 H(+)(in) = a quinol + NAD(+) + 4 H(+)(out). NDH-1 shuttles electrons from NADH, via FMN and iron-sulfur (Fe-S) centers, to quinones in the respiratory chain. The immediate electron acceptor for the enzyme in this species is believed to be ubiquinone. Couples the redox reaction to proton translocation (for every two electrons transferred, four hydrogen ions are translocated across the cytoplasmic membrane), and thus conserves the redox energy in a proton gradient. The chain is NADH-quinone oxidoreductase subunit D from Herminiimonas arsenicoxydans.